Here is a 252-residue protein sequence, read N- to C-terminus: Imidazole glycerol phosphate synthase subunit HisF (252 aa).

Catalysis depends on residues aspartate 11 and aspartate 130.

The protein belongs to the HisA/HisF family. Heterodimer of HisH and HisF.

Its subcellular location is the cytoplasm. The enzyme catalyses 5-[(5-phospho-1-deoxy-D-ribulos-1-ylimino)methylamino]-1-(5-phospho-beta-D-ribosyl)imidazole-4-carboxamide + L-glutamine = D-erythro-1-(imidazol-4-yl)glycerol 3-phosphate + 5-amino-1-(5-phospho-beta-D-ribosyl)imidazole-4-carboxamide + L-glutamate + H(+). It functions in the pathway amino-acid biosynthesis; L-histidine biosynthesis; L-histidine from 5-phospho-alpha-D-ribose 1-diphosphate: step 5/9. Its function is as follows. IGPS catalyzes the conversion of PRFAR and glutamine to IGP, AICAR and glutamate. The HisF subunit catalyzes the cyclization activity that produces IGP and AICAR from PRFAR using the ammonia provided by the HisH subunit. This Acinetobacter baylyi (strain ATCC 33305 / BD413 / ADP1) protein is Imidazole glycerol phosphate synthase subunit HisF.